The sequence spans 183 residues: Protein SHI RELATED SEQUENCE 6 (183 aa).

Residues Cys41, Cys44, Cys52, Cys57, Cys61, and Cys68 each contribute to the Zn(2+) site. The segment at residues 41–68 (CRDCGNRAKKECLFERCRTCCKSRGYNC) is a DNA-binding region (zn(2)-C6 fungal-type; degenerate). The segment covering 79–88 (SSATRSSSSP) has biased composition (low complexity). Residues 79 to 121 (SSATRSSSSPSERKKKLKIDKQSSPNVSLLPTTTSRQERGFRE) are disordered. Polar residues predominate over residues 100-113 (QSSPNVSLLPTTTS). The short motif at 157-160 (ISGH) is the Required for homo- and heterodimerization element.

The protein belongs to the SHI protein family.

It localises to the nucleus. Its function is as follows. Transcription activator that binds DNA on 5'-ACTCTAC-3' and promotes auxin homeostasis-regulating gene expression (e.g. YUC genes), as well as genes affecting stamen development, cell expansion and timing of flowering. Synergistically with other SHI-related proteins, regulates gynoecium, stamen and leaf development in a dose-dependent manner, controlling apical-basal patterning. Promotes style and stigma formation, and influences vascular development during gynoecium development. May also have a role in the formation and/or maintenance of the shoot apical meristem (SAM). This Arabidopsis thaliana (Mouse-ear cress) protein is Protein SHI RELATED SEQUENCE 6 (SRS6).